A 507-amino-acid chain; its full sequence is ATP synthase subunit alpha, mitochondrial (507 aa).

Gly-171–Thr-178 is an ATP binding site.

The protein belongs to the ATPase alpha/beta chains family. As to quaternary structure, F-type ATPases have 2 components, CF(1) - the catalytic core - and CF(0) - the membrane proton channel. CF(1) has five subunits: alpha(3), beta(3), gamma(1), delta(1), epsilon(1). CF(0) has three main subunits: a, b and c.

It is found in the mitochondrion. Its subcellular location is the mitochondrion inner membrane. Functionally, mitochondrial membrane ATP synthase (F(1)F(0) ATP synthase or Complex V) produces ATP from ADP in the presence of a proton gradient across the membrane which is generated by electron transport complexes of the respiratory chain. F-type ATPases consist of two structural domains, F(1) - containing the extramembraneous catalytic core, and F(0) - containing the membrane proton channel, linked together by a central stalk and a peripheral stalk. During catalysis, ATP synthesis in the catalytic domain of F(1) is coupled via a rotary mechanism of the central stalk subunits to proton translocation. Subunits alpha and beta form the catalytic core in F(1). Rotation of the central stalk against the surrounding alpha(3)beta(3) subunits leads to hydrolysis of ATP in three separate catalytic sites on the beta subunits. Subunit alpha does not bear the catalytic high-affinity ATP-binding sites. The chain is ATP synthase subunit alpha, mitochondrial (ATPA) from Pisum sativum (Garden pea).